A 122-amino-acid polypeptide reads, in one-letter code: Large ribosomal subunit protein uL14c (122 aa).

This sequence belongs to the universal ribosomal protein uL14 family. Part of the 50S ribosomal subunit.

It is found in the plastid. The protein localises to the chloroplast. Functionally, binds to 23S rRNA. The polypeptide is Large ribosomal subunit protein uL14c (Adiantum capillus-veneris (Maidenhair fern)).